Consider the following 135-residue polypeptide: Phosphomevalonate dehydratase small subunit (135 aa).

Catalysis depends on Ser67, which acts as the Proton acceptor.

Belongs to the AcnX type II small subunit family. In terms of assembly, heterodimer composed of a large subunit (PMDh-L) and a small subunit (PMDh-S).

The catalysed reaction is (R)-5-phosphomevalonate = (2E)-3-methyl-5-phosphooxypent-2-enoate + H2O. It participates in isoprenoid biosynthesis; isopentenyl diphosphate biosynthesis via mevalonate pathway. In terms of biological role, component of a hydro-lyase that catalyzes the dehydration of mevalonate 5-phosphate (MVA5P) to form trans-anhydromevalonate 5-phosphate (tAHMP). Involved in the archaeal mevalonate (MVA) pathway, which provides fundamental precursors for isoprenoid biosynthesis, such as isopentenyl diphosphate (IPP) and dimethylallyl diphosphate (DMAPP). The chain is Phosphomevalonate dehydratase small subunit from Methanopyrus kandleri (strain AV19 / DSM 6324 / JCM 9639 / NBRC 100938).